We begin with the raw amino-acid sequence, 427 residues long: Histidinol dehydrogenase (427 aa).

NAD(+)-binding residues include Tyr-125, Gln-186, and Asn-209. Substrate is bound by residues Ser-234, Gln-256, and His-259. The Zn(2+) site is built by Gln-256 and His-259. Active-site proton acceptor residues include Glu-325 and His-326. 4 residues coordinate substrate: His-326, Asp-359, Glu-413, and His-419. Position 359 (Asp-359) interacts with Zn(2+). A Zn(2+)-binding site is contributed by His-419.

It belongs to the histidinol dehydrogenase family. Zn(2+) serves as cofactor.

The catalysed reaction is L-histidinol + 2 NAD(+) + H2O = L-histidine + 2 NADH + 3 H(+). It participates in amino-acid biosynthesis; L-histidine biosynthesis; L-histidine from 5-phospho-alpha-D-ribose 1-diphosphate: step 9/9. In terms of biological role, catalyzes the sequential NAD-dependent oxidations of L-histidinol to L-histidinaldehyde and then to L-histidine. This is Histidinol dehydrogenase from Leptospira interrogans serogroup Icterohaemorrhagiae serovar Lai (strain 56601).